The sequence spans 336 residues: MSLGAADVGAGAGPPGQHAGAVDNWPVAIIGSGVVGTDLMSRIGNGDGRLRVSAMVGTNPHCDGLARAAAAGISTSPGGVDGLLSMPEFANIRLVFDTTNPGAHQSNWARLADTGVRMLDLTASAIGPCCVPAVNLDAQLDAPNLSMATCSAQAAVPIVAAVRRHGVVRYAEVVSAIASQALGPAERVTLDEFAELTTTAVQELGGARRAKTLTIVNPADPPMPMRTTVFCLVDQADEVARNEADVLAVVDGVQALLPGYRLKHRVQFERLGSGNTLYIPGTGEFGGTRITVLLEITAAGGYLPACAGNVAIVTSAAKATAEAIVERHAQTLKAKI.

32 to 35 (SGVV) contributes to the NAD(+) binding site. The Acyl-thioester intermediate role is filled by cysteine 150. Asparagine 309 provides a ligand contact to NAD(+).

This sequence belongs to the acetaldehyde dehydrogenase family.

The catalysed reaction is acetaldehyde + NAD(+) + CoA = acetyl-CoA + NADH + H(+). This is Acetaldehyde dehydrogenase 1 (mhpF) from Mycobacterium ulcerans (strain Agy99).